The chain runs to 55 residues: ATP synthase F(0) complex subunit 8 (55 aa).

A helical transmembrane segment spans residues 4–24 (LNPAPWFAILVFSWLVFLTVI). A disordered region spans residues 34–55 (TNEPTSQSTEKAKPEPWNWPWH).

The protein belongs to the ATPase protein 8 family. In terms of assembly, component of the ATP synthase complex composed at least of ATP5F1A/subunit alpha, ATP5F1B/subunit beta, ATP5MC1/subunit c (homooctomer), MT-ATP6/subunit a, MT-ATP8/subunit 8, ATP5ME/subunit e, ATP5MF/subunit f, ATP5MG/subunit g, ATP5MK/subunit k, ATP5MJ/subunit j, ATP5F1C/subunit gamma, ATP5F1D/subunit delta, ATP5F1E/subunit epsilon, ATP5PF/subunit F6, ATP5PB/subunit b, ATP5PD/subunit d, ATP5PO/subunit OSCP. ATP synthase complex consists of a soluble F(1) head domain (subunits alpha(3) and beta(3)) - the catalytic core - and a membrane F(0) domain - the membrane proton channel (subunits c, a, 8, e, f, g, k and j). These two domains are linked by a central stalk (subunits gamma, delta, and epsilon) rotating inside the F1 region and a stationary peripheral stalk (subunits F6, b, d, and OSCP).

The protein resides in the mitochondrion membrane. Functionally, subunit 8, of the mitochondrial membrane ATP synthase complex (F(1)F(0) ATP synthase or Complex V) that produces ATP from ADP in the presence of a proton gradient across the membrane which is generated by electron transport complexes of the respiratory chain. ATP synthase complex consist of a soluble F(1) head domain - the catalytic core - and a membrane F(1) domain - the membrane proton channel. These two domains are linked by a central stalk rotating inside the F(1) region and a stationary peripheral stalk. During catalysis, ATP synthesis in the catalytic domain of F(1) is coupled via a rotary mechanism of the central stalk subunits to proton translocation. In vivo, can only synthesize ATP although its ATP hydrolase activity can be activated artificially in vitro. Part of the complex F(0) domain. The protein is ATP synthase F(0) complex subunit 8 of Oncorhynchus mykiss (Rainbow trout).